The following is a 183-amino-acid chain: MGSSTSTPAPPPKKNKPEGRKADNQILNSYQKSIVRNAWRHMSQKGPSNCGSTITRRMMARKSTIGDILDRSTLDYHNLQIVEFLQKVMQSLDEPDKISKLCQEIGQKHAKYRRSKGMKIDYWDKLGEAITETIREYQGWKIHRESLRAATVLVSYVVDQLRFGYSRGLHVQGSRETKEDDEE.

A disordered region spans residues 1–25 (MGSSTSTPAPPPKKNKPEGRKADNQ). A lipid anchor (N-myristoyl glycine) is attached at G2. The Nuclear localization signal signature appears at 12–18 (PKKNKPE). The region spanning 26–166 (ILNSYQKSIV…VVDQLRFGYS (141 aa)) is the Globin domain. Positions 77 and 109 each coordinate heme.

The protein belongs to the globin family. As to quaternary structure, homodimer. Occurs in an equilibrium of monomeric and dimeric forms in solution. Detected in the head mesodermal cell. In the tail region, detected in the stomatointestinal and anal depressor muscle cells.

Its subcellular location is the cytoplasm. It localises to the nucleus lamina. The protein resides in the cell membrane. Its function is as follows. Plays a role in electron transport. Utilizes the bis-histidyl hexacoordinated complex with iron to transfer electrons to cytochrome c and molecular oxygen. Plays a regulatory role in the periodicity of the defecation cycle under oxidative stress conditions. Not involved in imparting protection against general conditions of oxidative stress. May participate in redox reactions under anaerobic conditions. The chain is Globin-like protein 26 from Caenorhabditis elegans.